A 250-amino-acid chain; its full sequence is rRNA methyltransferase 2, mitochondrial (250 aa).

The N-terminal 35 residues, 1–35 (MRLVFTGNCVFKRLLHTEIGGKYAKQQPRNLKGRS), are a transit peptide targeting the mitochondrion. S-adenosyl-L-methionine contacts are provided by residues 90 to 93 (PGSW), Asp-119, 136 to 137 (DF), and Asp-161. The Proton acceptor role is filled by Lys-201.

The protein belongs to the class I-like SAM-binding methyltransferase superfamily. RNA methyltransferase RlmE family.

It localises to the mitochondrion. It carries out the reaction a uridine in rRNA + S-adenosyl-L-methionine = a 2'-O-methyluridine in rRNA + S-adenosyl-L-homocysteine + H(+). Its function is as follows. S-adenosyl-L-methionine-dependent 2'-O-ribose methyltransferase that catalyzes the formation of 2'-O-methyluridine at position 1579 (Um1579) in the mitochondrial large subunit ribosomal RNA (mtLSU rRNA), a universally conserved modification in the peptidyl transferase domain of the mtLSU rRNA. This activity may require prior 2'-O-methylguanosine modification at position 1580 (Gm1580) by MRM3. Essential for late-stage assembly of mtLSU required for efficient translation of mitochondrial DNA encoded proteins; methyltransferase activity is not required for this function. Essential for mitochondrial respiratory function. In Drosophila melanogaster (Fruit fly), this protein is rRNA methyltransferase 2, mitochondrial.